A 380-amino-acid polypeptide reads, in one-letter code: N-acetylaspartylglutamate synthase A (380 aa).

Positions 115–300 constitute an ATP-grasp domain; it reads FQELAGHGVP…VGAIIADYAM (186 aa). Residues K154, 189–199, and R215 contribute to the ATP site; that span reads QKYVKESHGKD. D260, E273, and N275 together coordinate Mg(2+). Residues D260, E273, and N275 each contribute to the Mn(2+) site. Phosphoserine is present on S319. A disordered region spans residues 345 to 370; sequence GSTSSESEPELGEARDSSVKTMGAPP.

The protein belongs to the RimK family. Mg(2+) is required as a cofactor. It depends on Mn(2+) as a cofactor. Highly expressed in spinal cord and brain.

The protein resides in the cytoplasm. It catalyses the reaction N-acetyl-L-aspartate + L-glutamate + ATP = N-acetyl-L-aspartyl-L-glutamate + ADP + phosphate + H(+). It carries out the reaction N-acetyl-L-aspartate + 2 L-glutamate + 2 ATP = N-acetyl-L-aspartyl-L-glutamyl-L-glutamate + 2 ADP + 2 phosphate + 2 H(+). Functionally, catalyzes the synthesis of N-acetyl-L-aspartyl-L-glutamate (NAAG) and N-acetyl-L-aspartyl-L-glutamyl-L-glutamate. This is N-acetylaspartylglutamate synthase A (Rimkla) from Mus musculus (Mouse).